Consider the following 374-residue polypeptide: Patatin-2-Kuras 4 (374 aa).

The N-terminal stretch at 1 to 11 (MILATTSSTCA) is a signal peptide. Residues 20–217 (LSIDGGGIKG…TVGDPALLSL (198 aa)) enclose the PNPLA domain. The GXGXXG motif lies at 24–29 (GGGIKG). The short motif at 63 to 67 (GTSTG) is the GXSXG element. The Nucleophile role is filled by Ser65. The N-linked (GlcNAc...) asparagine glycan is linked to Asn103. Asp203 functions as the Proton acceptor in the catalytic mechanism. The DGA/G motif lies at 203 to 205 (DGG). Residues 309–372 (ENALTGTTTE…DRKKLRANKA (64 aa)) are a coiled coil.

Belongs to the patatin family.

The protein localises to the vacuole. Its function is as follows. Probable lipolytic acyl hydrolase (LAH), an activity which is thought to be involved in the response of tubers to pathogens. This chain is Patatin-2-Kuras 4 (pat2-k4), found in Solanum tuberosum (Potato).